Reading from the N-terminus, the 144-residue chain is MRLNTLSPAEGAKHSAKRLGRGIGSGLGKTGGRGHKGQKSRTGGGVRRGFEGGQMPLYRRLPKFGFTSMKAAVTAEVRLNDLAKVEGGVVTLESLKAANVITKDIQFVKIILAGEVKGAVVVRGLRVTKGAKAAIEAAGGSVEE.

The disordered stretch occupies residues 1–53 (MRLNTLSPAEGAKHSAKRLGRGIGSGLGKTGGRGHKGQKSRTGGGVRRGFEGG). Positions 21-31 (RGIGSGLGKTG) are enriched in gly residues.

Belongs to the universal ribosomal protein uL15 family. As to quaternary structure, part of the 50S ribosomal subunit.

In terms of biological role, binds to the 23S rRNA. The chain is Large ribosomal subunit protein uL15 from Pasteurella multocida (strain Pm70).